The sequence spans 280 residues: Ribosomal RNA small subunit methyltransferase A (280 aa).

Positions 28, 30, 55, 77, 103, and 122 each coordinate S-adenosyl-L-methionine.

This sequence belongs to the class I-like SAM-binding methyltransferase superfamily. rRNA adenine N(6)-methyltransferase family. RsmA subfamily.

The protein localises to the cytoplasm. The enzyme catalyses adenosine(1518)/adenosine(1519) in 16S rRNA + 4 S-adenosyl-L-methionine = N(6)-dimethyladenosine(1518)/N(6)-dimethyladenosine(1519) in 16S rRNA + 4 S-adenosyl-L-homocysteine + 4 H(+). Functionally, specifically dimethylates two adjacent adenosines (A1518 and A1519) in the loop of a conserved hairpin near the 3'-end of 16S rRNA in the 30S particle. May play a critical role in biogenesis of 30S subunits. This Dinoroseobacter shibae (strain DSM 16493 / NCIMB 14021 / DFL 12) protein is Ribosomal RNA small subunit methyltransferase A.